A 182-amino-acid polypeptide reads, in one-letter code: MGCSGCSGGCGSSCGGCGSRCGGCSSSCCVPVCCCKPVCCCVPACSCSSCGKGGCGSSCGGSKGGCGSCGGSKGGCGSCGGCGSSCCKPVCCCVPACSCSSCGKGGCGSCGGSKGGCGSCGGSKGGCGSCGGCGSGCGSSCCVPVCCCVPACSCSSCGKGGCGSCGCSQSSCCVPVCCQRKI.

The protein belongs to the KRTAP type 5 family. As to expression, cuticle layers of differentiating wool follicles.

Functionally, the keratin products of mammalian epidermal derivatives such as wool and hair consist of microfibrils embedded in a rigid matrix of other proteins. The matrix proteins include the high-sulfur and high-tyrosine keratins, having molecular weights of 6-20 kDa, whereas the microfibrils contain the larger, low-sulfur keratins (40-56 kDa). This is Keratin, ultra high-sulfur matrix protein from Ovis aries (Sheep).